A 321-amino-acid chain; its full sequence is Mitochondrial thiamine pyrophosphate carrier 1 (321 aa).

The next 6 helical transmembrane spans lie at 12–28 (GTRR…GLVS), 91–107 (LMYV…YRTT), 126–146 (FVAG…LDLL), 184–200 (AAVG…FATY), 221–237 (AAGV…MFPL), and 284–301 (GLTV…VTMW). 3 Solcar repeats span residues 12-110 (GTRR…TTQA), 120-206 (PPSA…LRPP), and 214-309 (PFGS…SLRL).

This sequence belongs to the mitochondrial carrier (TC 2.A.29) family.

It localises to the mitochondrion inner membrane. Functionally, mitochondrial transporter that mediates uptake of thiamine pyrophosphate (ThPP) into mitochondria. This Aspergillus niger (strain ATCC MYA-4892 / CBS 513.88 / FGSC A1513) protein is Mitochondrial thiamine pyrophosphate carrier 1 (tpc1).